Reading from the N-terminus, the 157-residue chain is Protein Smg homolog (157 aa).

Belongs to the Smg family.

This is Protein Smg homolog from Xylella fastidiosa (strain M23).